A 1150-amino-acid chain; its full sequence is Apomucin (1150 aa).

Low complexity-rich tracts occupy residues 1 to 36 (ETARPSVAGSGTTGTVSGASGSTGSSSGSTGATGAS) and 46 to 79 (SVAGSSGAPAVSSGASQAAGTSGAGPGTTASSVG). 5 consecutive repeat copies span residues 1-44 (ETAR…ETSR), 45-125 (ISVA…ETSR), 126-206 (ISVA…ETSR), 207-287 (ISVA…ETSR), and 288-368 (ISVA…ETSR). The segment at 1 to 368 (ETARPSVAGS…ASIGQPETSR (368 aa)) is 6 X 81 AA tandem repeats. Disordered regions lie at residues 1-730 (ETAR…KTGI) and 776-925 (APGS…PAPL). O-linked (GalNAc...) serine; partial glycans are attached at residues S46, S50, S51, S57, S58, and S61. The O-linked (GalNAc...) threonine; partial glycan is linked to T66. An O-linked (GalNAc...) serine; partial glycan is attached at S67. O-linked (GalNAc...) threonine; partial glycosylation is found at T73 and T74. O-linked (GalNAc...) serine; partial glycosylation is found at S76 and S77. 2 O-linked (GalNAc...) threonine; partial glycosylation sites follow: T81 and T83. Residues 86–117 (PSVAGSGTTGTVSGASGSTGSSSGSPGATGAS) show a composition bias toward low complexity. O-linked (GalNAc...) serine; partial glycosylation is found at S87 and S91. Residues T93, T94, and T96 are each glycosylated (O-linked (GalNAc...) threonine; partial). Residues S98, S101, and S103 are each glycosylated (O-linked (GalNAc...) serine; partial). An O-linked (GalNAc...) threonine; partial glycan is attached at T104. O-linked (GalNAc...) serine; partial glycosylation is found at S106, S107, S108, and S110. Residue T114 is glycosylated (O-linked (GalNAc...) threonine; partial). An O-linked (GalNAc...) serine; partial glycan is attached at S117. The O-linked (GalNAc...) threonine; partial glycan is linked to T123. S124 carries an O-linked (GalNAc...) serine; partial glycan. 7 stretches are compositionally biased toward low complexity: residues 127-160 (SVAGSSGAPAVSSGASQAAGTSGAGPGTTASSVG), 167-198 (PSVAGSGTTGTVSGASGSTGSSSGSPGATGAS), 208-241 (SVAGSSGAPAVSSGASQAAGTSGAGPGTTASSVG), 248-279 (PSVAGSGTTGTVSGASGSTGSSSGSPGATGAS), 289-322 (SVAGSSGAPAVSSGASQAAGTSGAGPGTTASSVG), 329-360 (PSVAGSGTTGTVSGASGSTGSSSGSPGATGAS), and 370-396 (SVAGSSGAPAVSSGASQAAGTSEATTS). Residues 369–391 (ISVAGSSGAPAVSSGASQAAGTS) form a 6; truncated repeat. N-linked (GlcNAc...) asparagine glycosylation occurs at N418. Over residues 442 to 459 (SYNTEATTSIGRSGTTHT) the composition is skewed to polar residues. The span at 473 to 506 (SHSSQSSKPGSSVTTPGSPESGSETGTSGEFSTT) shows a compositional bias: low complexity. Composition is skewed to polar residues over residues 507–517 (VISGSSHTEAT) and 537–547 (ELSGTTIASGN). N-linked (GlcNAc...) asparagine glycosylation is present at N547. The segment covering 548-558 (ATTEATTSTET) has biased composition (low complexity). The span at 564-586 (TGAQTTVPGSQVSGSETGTSEAV) shows a compositional bias: polar residues. The segment covering 590 to 625 (AIASGSSSTGTTSGASDSQVTGSRTGTTGVVLGTTV) has biased composition (low complexity). Composition is skewed to polar residues over residues 626–635 (APGSSSTGAT) and 643–661 (GTRSTSLGTTRVASGTTYE). Gly residues predominate over residues 671–682 (GGSGTPGSGINT). 3 stretches are compositionally biased toward polar residues: residues 688-697 (QVTGIQTGTT), 706-729 (LPGSSNTGATTSPSERTSPGSKTG), and 779-788 (SFNTKATTPT). Over residues 790–833 (VRAATGAGTAVGATSRSTGISTGPENSTPGTTETGSGTTSSPGG) the composition is skewed to low complexity. Over residues 875-908 (ETTTAPRISATGSTSVSKEITASPKVSSPETTAG) the composition is skewed to polar residues. N-linked (GlcNAc...) asparagine glycosylation is found at N917, N985, N1002, and N1068. One can recognise a VWFC domain in the interval 929-995 (PVCHGPLGEE…DTCCEIGHCE (67 aa)). 4 cysteine pairs are disulfide-bonded: C1062/C1109, C1076/C1123, C1085/C1139, and C1089/C1141. In terms of domain architecture, CTCK spans 1062–1146 (CKPSPVNVTV…TACSCLDPCQ (85 aa)).

Intermolecular disulfide bonds could help maintain a multimeric mucin structure. Post-translationally, extensively O-glycosylated on most but not all Ser and Thr residues of the repeat units. Highest glycosylation appears to occur on Ser residues which have Gly at positions at +2 or -2 from the glycosylation site or, where Gly is the penultimate residue. The presence of proline (usually at position +3 or -3) appears to also enhance glycosylation. Submaxillary mucosae.

The protein resides in the secreted. Apomucin is part of mucin, the major glycoprotein synthesized and secreted by mucous cells of the submaxillary gland. Its highly viscous aqueous solutions serve to lubricate the oral cavity and to protect it from the external environment. In Sus scrofa (Pig), this protein is Apomucin.